The primary structure comprises 453 residues: Probable 1,4-beta-D-glucan cellobiohydrolase A (453 aa).

A signal peptide spans 1-17; the sequence is MYQRALLFSALATAVSA. Glu-226 serves as the catalytic Nucleophile. Glu-231 functions as the Proton donor in the catalytic mechanism. An N-linked (GlcNAc...) asparagine glycan is attached at Asn-284.

This sequence belongs to the glycosyl hydrolase 7 (cellulase C) family.

The protein resides in the secreted. The enzyme catalyses Hydrolysis of (1-&gt;4)-beta-D-glucosidic linkages in cellulose and cellotetraose, releasing cellobiose from the non-reducing ends of the chains.. The biological conversion of cellulose to glucose generally requires three types of hydrolytic enzymes: (1) Endoglucanases which cut internal beta-1,4-glucosidic bonds; (2) Exocellobiohydrolases that cut the disaccharide cellobiose from the non-reducing end of the cellulose polymer chain; (3) Beta-1,4-glucosidases which hydrolyze the cellobiose and other short cello-oligosaccharides to glucose. The sequence is that of Probable 1,4-beta-D-glucan cellobiohydrolase A (cbhA) from Aspergillus clavatus (strain ATCC 1007 / CBS 513.65 / DSM 816 / NCTC 3887 / NRRL 1 / QM 1276 / 107).